Here is a 660-residue protein sequence, read N- to C-terminus: UvrABC system protein B (660 aa).

The region spanning 25–183 (EGLNKGLKHQ…ALINIHYERN (159 aa)) is the Helicase ATP-binding domain. 38-45 (GVTGSGKT) provides a ligand contact to ATP. The Beta-hairpin motif lies at 91–114 (YYDYYQPEAYLPTTDTYIEKDSSV). Positions 431-593 (QIDDLIGEVN…IVPQTIHKAL (163 aa)) constitute a Helicase C-terminal domain. A UVR domain is found at 622–657 (ADMVIELEAEMHLAAKNLEFERAAALRDNIKELRST).

Belongs to the UvrB family. In terms of assembly, forms a heterotetramer with UvrA during the search for lesions. Interacts with UvrC in an incision complex.

It is found in the cytoplasm. In terms of biological role, the UvrABC repair system catalyzes the recognition and processing of DNA lesions. A damage recognition complex composed of 2 UvrA and 2 UvrB subunits scans DNA for abnormalities. Upon binding of the UvrA(2)B(2) complex to a putative damaged site, the DNA wraps around one UvrB monomer. DNA wrap is dependent on ATP binding by UvrB and probably causes local melting of the DNA helix, facilitating insertion of UvrB beta-hairpin between the DNA strands. Then UvrB probes one DNA strand for the presence of a lesion. If a lesion is found the UvrA subunits dissociate and the UvrB-DNA preincision complex is formed. This complex is subsequently bound by UvrC and the second UvrB is released. If no lesion is found, the DNA wraps around the other UvrB subunit that will check the other stand for damage. The polypeptide is UvrABC system protein B (Methanococcoides burtonii (strain DSM 6242 / NBRC 107633 / OCM 468 / ACE-M)).